The chain runs to 265 residues: tRNA pseudouridine synthase A (265 aa).

Residue aspartate 53 is the Nucleophile of the active site. A substrate-binding site is contributed by tyrosine 111.

It belongs to the tRNA pseudouridine synthase TruA family. In terms of assembly, homodimer.

The enzyme catalyses uridine(38/39/40) in tRNA = pseudouridine(38/39/40) in tRNA. In terms of biological role, formation of pseudouridine at positions 38, 39 and 40 in the anticodon stem and loop of transfer RNAs. The chain is tRNA pseudouridine synthase A from Acinetobacter baumannii (strain AB307-0294).